Consider the following 837-residue polypeptide: Putative outer membrane protein assembly factor TP_0326 (837 aa).

The first 21 residues, 1 to 21, serve as a signal peptide directing secretion; it reads MLKKASAFLIASCCVMSLAWA. Residues 22 to 433 lie on the Periplasmic side of the membrane; sequence QANDNWYEGK…ILNVEEQSTA (412 aa). POTRA domains are found at residues 31 to 105, 106 to 182, 185 to 273, 276 to 354, and 357 to 430; these read KPIS…VKER, PSVK…IQEG, TVVS…VVEG, YRYG…VVER, and SHVE…VEEQ. A beta stranded transmembrane segment spans residues 434-442; it reads NVQFGVTFS. Topologically, residues 443–450 are extracellular; loop L1; that stretch reads GVGEAGTF. The beta stranded transmembrane segment at 451–461 threads the bilayer; that stretch reads PLSLFCQWEEK. Topologically, residues 462-468 are periplasmic; sequence NFLGKGN. Residues 469 to 476 traverse the membrane as a beta stranded segment; sequence EISVNATL. Topologically, residues 477 to 478 are extracellular; loop L2; it reads GS. Residues 479-489 form a beta stranded membrane-spanning segment; it reads EAQSLKLGYVE. At 490-499 the chain is on the periplasmic side; that stretch reads RWFLGSPLTV. Residues 500–520 form a beta stranded membrane-spanning segment; that stretch reads GFDFELTHKNLFVYRAGSYGN. At 521–530 the chain is on the extracellular; loop L3 side; sequence GLPHPYTSRE. Residues 531–543 form a beta stranded membrane-spanning segment; it reads QWASSPGLAESFR. Over 544–554 the chain is Periplasmic; it reads LKYSRFESAIG. A beta stranded transmembrane segment spans residues 555-568; the sequence is AHTGYQWYPRYAVI. Residues 569 to 601 are Extracellular; loop L4-facing; sequence RVNGGVDFRVVKNFYDKDNNQPFDLTVKEQLNW. Residues 602–615 traverse the membrane as a beta stranded segment; sequence TSINSFWTSVSFDG. The Periplasmic segment spans residues 616-623; the sequence is RDFAYDPS. The chain crosses the membrane as a beta stranded span at residues 624 to 636; it reads SGWFLGQRCTFNG. The Extracellular; loop L5 portion of the chain corresponds to 637–644; sequence LVPFLEKE. A beta stranded membrane pass occupies residues 645–658; that stretch reads HSFRSDTKAEFYVT. At 659 to 667 the chain is on the periplasmic side; it reads LLNYPVSAV. A beta stranded membrane pass occupies residues 668–682; sequence WNLKFVLAFYTGVSV. Over 683–724 the chain is Extracellular; loop L6; sequence QTYYGRRKSENGKGNGVRSGALVIDGVLVGRGWSEDAKKNTG. Residues 725 to 736 traverse the membrane as a beta stranded segment; sequence DLLLHHWIEFRW. Topologically, residues 737-741 are periplasmic; it reads PLAHG. A beta stranded transmembrane segment spans residues 742-756; it reads IVSFDFFFDAAMVYN. Topologically, residues 757–786 are extracellular; loop L7; it reads IESQSPNGSSSASSSSSSSSSSSRTTSSEG. The tract at residues 761-785 is disordered; the sequence is SPNGSSSASSSSSSSSSSSRTTSSE. Residues 765–784 are compositionally biased toward low complexity; sequence SSSASSSSSSSSSSSRTTSS. A beta stranded membrane pass occupies residues 787-799; sequence LYKMSYGPGLRFT. Topologically, residues 800-802 are periplasmic; it reads LPQ. Residues 803–814 form a beta stranded membrane-spanning segment; the sequence is FPLKLAFANTFT. Over 815–824 the chain is Extracellular; loop L8; the sequence is SPGGIPKTKK. The beta stranded transmembrane segment at 825 to 829 threads the bilayer; the sequence is NWNFV. Residues 830 to 837 are Periplasmic-facing; it reads LSFTVNNL.

It belongs to the BamA family. As to quaternary structure, part of 2 complexes of about 239 and 164 kDa.

Its subcellular location is the cell outer membrane. Its function is as follows. Might be part of the outer membrane protein assembly complex, which is involved in assembly and insertion of beta-barrel proteins into the outer membrane. Both rabbit immune serum and rabbit antiserum specific for extracytoplasmic loop L4 promote bacteria internalization by rabbit peritoneal macrophages. Pools of human syphilitic sera from the USA and Columbia recognize both the N-terminal POTRA-containing and C-terminal beta-barrel domains as well as loop L4, showing this protein stimulates the immune system in both humans and rabbits. The protein is Putative outer membrane protein assembly factor TP_0326 (tp92) of Treponema pallidum (strain Nichols).